The sequence spans 378 residues: ATP phosphoribosyltransferase regulatory subunit (378 aa).

The protein belongs to the class-II aminoacyl-tRNA synthetase family. HisZ subfamily. As to quaternary structure, heteromultimer composed of HisG and HisZ subunits.

Its subcellular location is the cytoplasm. The protein operates within amino-acid biosynthesis; L-histidine biosynthesis; L-histidine from 5-phospho-alpha-D-ribose 1-diphosphate: step 1/9. Required for the first step of histidine biosynthesis. May allow the feedback regulation of ATP phosphoribosyltransferase activity by histidine. This Brucella abortus (strain 2308) protein is ATP phosphoribosyltransferase regulatory subunit.